The primary structure comprises 266 residues: ATP synthase subunit a (266 aa).

6 helical membrane passes run 38 to 58 (KQML…ILAA), 99 to 119 (LLFS…IPVI), 126 to 146 (HVGG…IIGI), 162 to 182 (GVPW…NFLV), 191 to 211 (LFAT…GIEF), and 224 to 244 (SVLV…IMAL).

The protein belongs to the ATPase A chain family. F-type ATPases have 2 components, CF(1) - the catalytic core - and CF(0) - the membrane proton channel. CF(1) has five subunits: alpha(3), beta(3), gamma(1), delta(1), epsilon(1). CF(0) has three main subunits: a(1), b(2) and c(9-12). The alpha and beta chains form an alternating ring which encloses part of the gamma chain. CF(1) is attached to CF(0) by a central stalk formed by the gamma and epsilon chains, while a peripheral stalk is formed by the delta and b chains.

The protein resides in the cell membrane. Functionally, key component of the proton channel; it plays a direct role in the translocation of protons across the membrane. This chain is ATP synthase subunit a, found in Paenarthrobacter aurescens (strain TC1).